A 353-amino-acid polypeptide reads, in one-letter code: Protein RecA (353 aa).

Residue 64 to 71 (GPESSGKT) participates in ATP binding. The tract at residues 331 to 353 (LEEASAQKEEVPVEDKLFDDELE) is disordered. Positions 335–346 (SAQKEEVPVEDK) are enriched in basic and acidic residues.

This sequence belongs to the RecA family.

It localises to the cytoplasm. Functionally, can catalyze the hydrolysis of ATP in the presence of single-stranded DNA, the ATP-dependent uptake of single-stranded DNA by duplex DNA, and the ATP-dependent hybridization of homologous single-stranded DNAs. It interacts with LexA causing its activation and leading to its autocatalytic cleavage. In Macrococcus caseolyticus (strain JCSC5402) (Macrococcoides caseolyticum), this protein is Protein RecA.